Reading from the N-terminus, the 245-residue chain is 8-amino-3,8-dideoxy-manno-octulosonate cytidylyltransferase (245 aa).

Belongs to the KdsB family.

It localises to the cytoplasm. It carries out the reaction 8-amino-3,8-dideoxy-alpha-D-manno-octulosonate + CTP = CMP-8-amino-3,8-dideoxy-alpha-D-manno-oct-2-ulosonate + diphosphate. It participates in bacterial outer membrane biogenesis; lipopolysaccharide biosynthesis. In terms of biological role, activates KDO8N (a required 8-carbon sugar) for incorporation into bacterial lipopolysaccharide in the Shewanella genus. The polypeptide is 8-amino-3,8-dideoxy-manno-octulosonate cytidylyltransferase (Shewanella sp. (strain W3-18-1)).